The following is a 156-amino-acid chain: MVEKIPMTASGYKKLEDELSTLKVKRIDVIEEMRLAAMDKDMRENAPYHAAKEQRGQIEGRIKEIEHELKYADVSEYTDTNTSKVNMGSTVKLRDPKNGECCTYTLVSPKEIEPLKGKISASSPIGKAVFNRNKGEQIEIEVPSGTLQYIIEDISF.

A coiled-coil region spans residues Tyr12–Ala72.

It belongs to the GreA/GreB family.

In terms of biological role, necessary for efficient RNA polymerase transcription elongation past template-encoded arresting sites. The arresting sites in DNA have the property of trapping a certain fraction of elongating RNA polymerases that pass through, resulting in locked ternary complexes. Cleavage of the nascent transcript by cleavage factors such as GreA or GreB allows the resumption of elongation from the new 3'terminus. GreA releases sequences of 2 to 3 nucleotides. The sequence is that of Transcription elongation factor GreA from Dehalococcoides mccartyi (strain ATCC BAA-2266 / KCTC 15142 / 195) (Dehalococcoides ethenogenes (strain 195)).